We begin with the raw amino-acid sequence, 264 residues long: tRNA pseudouridine synthase A (264 aa).

The Nucleophile role is filled by Asp51. Residue Tyr109 participates in substrate binding.

This sequence belongs to the tRNA pseudouridine synthase TruA family. As to quaternary structure, homodimer.

It catalyses the reaction uridine(38/39/40) in tRNA = pseudouridine(38/39/40) in tRNA. In terms of biological role, formation of pseudouridine at positions 38, 39 and 40 in the anticodon stem and loop of transfer RNAs. This is tRNA pseudouridine synthase A from Vibrio vulnificus (strain CMCP6).